Here is a 184-residue protein sequence, read N- to C-terminus: FMRFamide-related peptides (184 aa).

Residues 1–44 (MLVSSSVLKDDSSLRIFKESPNEFEYIIKRHDMDDRKEDTESKE) constitute a propeptide that is removed on maturation. Phe-56 bears the Phenylalanine amide mark. Positions 59–83 (GQSFFNNLDNSAFDNEIDSKVSRHP) are excised as a propeptide. Phe-94 is modified (phenylalanine amide). A propeptide spanning residues 97-107 (SGMKSTNDEQP) is cleaved from the precursor. Phe-119 carries the post-translational modification Phenylalanine amide. A propeptide spanning residues 122–184 (NIQIVPTDFD…SLETNSNHRE (63 aa)) is cleaved from the precursor.

Belongs to the FARP (FMRFamide related peptide) family. In terms of tissue distribution, expressed throughout the central nervous system.

The protein localises to the secreted. Its function is as follows. In insects, FMRFamide and related peptides have modulatory actions at skeletal neuromuscular junctions, and peptides that are immunologically related to FMRFamide are released into the circulation from neurohemal organs. This is FMRFamide-related peptides from Camponotus floridanus (Florida carpenter ant).